The sequence spans 1025 residues: Multidrug resistance protein MdtC (1025 aa).

The next 12 membrane-spanning stretches (helical) occupy residues 3 to 23, 333 to 353, 360 to 380, 387 to 407, 431 to 451, 463 to 483, 528 to 548, 853 to 873, 875 to 895, 897 to 917, 953 to 973, and 984 to 1004; these read FFAL…AITL, EVEQ…FLFL, IIPA…MYLC, LSLM…IVVL, VGFT…PLLL, FAVT…TLTP, LVGV…ISIP, VILI…LYES, VHPL…LLAL, LFNA…IGIV, PIMM…LSGG, and ITIV…TPVV.

It belongs to the resistance-nodulation-cell division (RND) (TC 2.A.6) family. MdtC subfamily. As to quaternary structure, part of a tripartite efflux system composed of MdtA, MdtB and MdtC. MdtC forms a heteromultimer with MdtB.

The protein localises to the cell inner membrane. Functionally, the MdtABC tripartite complex confers resistance against novobiocin and deoxycholate. This chain is Multidrug resistance protein MdtC, found in Escherichia coli O17:K52:H18 (strain UMN026 / ExPEC).